The primary structure comprises 364 residues: Chorismate synthase (364 aa).

2 residues coordinate NADP(+): Arg48 and Arg54. FMN contacts are provided by residues 130–132 (RSS), 242–243 (NA), Gly287, 302–306 (KPTSS), and Arg328.

This sequence belongs to the chorismate synthase family. In terms of assembly, homotetramer. It depends on FMNH2 as a cofactor.

It carries out the reaction 5-O-(1-carboxyvinyl)-3-phosphoshikimate = chorismate + phosphate. Its pathway is metabolic intermediate biosynthesis; chorismate biosynthesis; chorismate from D-erythrose 4-phosphate and phosphoenolpyruvate: step 7/7. In terms of biological role, catalyzes the anti-1,4-elimination of the C-3 phosphate and the C-6 proR hydrogen from 5-enolpyruvylshikimate-3-phosphate (EPSP) to yield chorismate, which is the branch point compound that serves as the starting substrate for the three terminal pathways of aromatic amino acid biosynthesis. This reaction introduces a second double bond into the aromatic ring system. This chain is Chorismate synthase, found in Allorhizobium ampelinum (strain ATCC BAA-846 / DSM 112012 / S4) (Agrobacterium vitis (strain S4)).